The following is a 258-amino-acid chain: Indole-3-glycerol phosphate synthase (258 aa).

This sequence belongs to the TrpC family.

The catalysed reaction is 1-(2-carboxyphenylamino)-1-deoxy-D-ribulose 5-phosphate + H(+) = (1S,2R)-1-C-(indol-3-yl)glycerol 3-phosphate + CO2 + H2O. The protein operates within amino-acid biosynthesis; L-tryptophan biosynthesis; L-tryptophan from chorismate: step 4/5. The protein is Indole-3-glycerol phosphate synthase of Legionella pneumophila (strain Lens).